The following is a 314-amino-acid chain: Formimidoylglutamase (314 aa).

The Mn(2+) site is built by His127, Asp153, His155, Asp157, Asp245, and Asp247.

This sequence belongs to the arginase family. Mn(2+) is required as a cofactor.

The enzyme catalyses N-formimidoyl-L-glutamate + H2O = formamide + L-glutamate. It functions in the pathway amino-acid degradation; L-histidine degradation into L-glutamate; L-glutamate from N-formimidoyl-L-glutamate (hydrolase route): step 1/1. Catalyzes the conversion of N-formimidoyl-L-glutamate to L-glutamate and formamide. This is Formimidoylglutamase from Aeromonas salmonicida (strain A449).